Reading from the N-terminus, the 879-residue chain is Alanine--tRNA ligase (879 aa).

Zn(2+) contacts are provided by H566, H570, C668, and H672.

The protein belongs to the class-II aminoacyl-tRNA synthetase family. Zn(2+) serves as cofactor.

The protein resides in the cytoplasm. It carries out the reaction tRNA(Ala) + L-alanine + ATP = L-alanyl-tRNA(Ala) + AMP + diphosphate. Catalyzes the attachment of alanine to tRNA(Ala) in a two-step reaction: alanine is first activated by ATP to form Ala-AMP and then transferred to the acceptor end of tRNA(Ala). Also edits incorrectly charged Ser-tRNA(Ala) and Gly-tRNA(Ala) via its editing domain. This is Alanine--tRNA ligase from Clostridium kluyveri (strain ATCC 8527 / DSM 555 / NBRC 12016 / NCIMB 10680 / K1).